The sequence spans 418 residues: Serine hydroxymethyltransferase (418 aa).

(6S)-5,6,7,8-tetrahydrofolate-binding positions include Leu121 and 125-127 (GHL). Lys230 carries the post-translational modification N6-(pyridoxal phosphate)lysine. Residue 355 to 357 (SPF) coordinates (6S)-5,6,7,8-tetrahydrofolate.

Belongs to the SHMT family. As to quaternary structure, homodimer. It depends on pyridoxal 5'-phosphate as a cofactor.

The protein localises to the cytoplasm. It catalyses the reaction (6R)-5,10-methylene-5,6,7,8-tetrahydrofolate + glycine + H2O = (6S)-5,6,7,8-tetrahydrofolate + L-serine. It functions in the pathway one-carbon metabolism; tetrahydrofolate interconversion. Its pathway is amino-acid biosynthesis; glycine biosynthesis; glycine from L-serine: step 1/1. Catalyzes the reversible interconversion of serine and glycine with tetrahydrofolate (THF) serving as the one-carbon carrier. This reaction serves as the major source of one-carbon groups required for the biosynthesis of purines, thymidylate, methionine, and other important biomolecules. Also exhibits THF-independent aldolase activity toward beta-hydroxyamino acids, producing glycine and aldehydes, via a retro-aldol mechanism. In Streptococcus pyogenes serotype M1, this protein is Serine hydroxymethyltransferase.